The following is a 420-amino-acid chain: Peroxisomal biogenesis factor 3 (420 aa).

At methionine 1–lysine 16 the chain is on the peroxisomal side. The chain crosses the membrane as a helical span at residues lysine 17–isoleucine 37. Residues lysine 38 to glutamate 420 are Cytoplasmic-facing.

This sequence belongs to the peroxin-3 family.

It is found in the peroxisome membrane. Functionally, involved in peroxisome biosynthesis. The sequence is that of Peroxisomal biogenesis factor 3 (PEX3) from Debaryomyces hansenii (strain ATCC 36239 / CBS 767 / BCRC 21394 / JCM 1990 / NBRC 0083 / IGC 2968) (Yeast).